Here is a 401-residue protein sequence, read N- to C-terminus: Formate-dependent phosphoribosylglycinamide formyltransferase (401 aa).

N(1)-(5-phospho-beta-D-ribosyl)glycinamide-binding positions include 22–23 (EL) and Glu-82. ATP-binding positions include Arg-115, Lys-157, 162-167 (SSGKGQ), 197-200 (EGFI), and Glu-205. The ATP-grasp domain occupies 120–315 (RLAAESLGLP…EFELHARAIL (196 aa)). Residues Glu-274 and Glu-286 each contribute to the Mg(2+) site. N(1)-(5-phospho-beta-D-ribosyl)glycinamide contacts are provided by residues Asp-293, Lys-362, and 369–370 (RR).

Belongs to the PurK/PurT family. As to quaternary structure, homodimer.

The enzyme catalyses N(1)-(5-phospho-beta-D-ribosyl)glycinamide + formate + ATP = N(2)-formyl-N(1)-(5-phospho-beta-D-ribosyl)glycinamide + ADP + phosphate + H(+). It participates in purine metabolism; IMP biosynthesis via de novo pathway; N(2)-formyl-N(1)-(5-phospho-D-ribosyl)glycinamide from N(1)-(5-phospho-D-ribosyl)glycinamide (formate route): step 1/1. Functionally, involved in the de novo purine biosynthesis. Catalyzes the transfer of formate to 5-phospho-ribosyl-glycinamide (GAR), producing 5-phospho-ribosyl-N-formylglycinamide (FGAR). Formate is provided by PurU via hydrolysis of 10-formyl-tetrahydrofolate. The chain is Formate-dependent phosphoribosylglycinamide formyltransferase from Cupriavidus taiwanensis (strain DSM 17343 / BCRC 17206 / CCUG 44338 / CIP 107171 / LMG 19424 / R1) (Ralstonia taiwanensis (strain LMG 19424)).